Reading from the N-terminus, the 362-residue chain is Variable large protein 25 (362 aa).

The first 26 residues, 1-26 (MRKRISAIINKLNISIMMMIVVLMIG), serve as a signal peptide directing secretion. A lipid anchor (N-palmitoyl cysteine) is attached at C27. A lipid anchor (S-diacylglycerol cysteine) is attached at C27.

This sequence belongs to the variable large protein (Vlp) family. Alpha subfamily.

Its subcellular location is the cell outer membrane. The Vlp and Vsp proteins are antigenically distinct proteins, only one vlp or vsp gene is transcriptionally active at any one time. Switching between these genes is a mechanism of host immune response evasion. This is Variable large protein 25 from Borrelia hermsii.